We begin with the raw amino-acid sequence, 619 residues long: Probable Xaa-Pro aminopeptidase P (619 aa).

Residues Asp-415, Asp-426, Glu-524, and Glu-538 each contribute to the Mn(2+) site.

The protein belongs to the peptidase M24B family. Mn(2+) is required as a cofactor.

The catalysed reaction is Release of any N-terminal amino acid, including proline, that is linked to proline, even from a dipeptide or tripeptide.. Functionally, catalyzes the removal of a penultimate prolyl residue from the N-termini of peptides. The protein is Probable Xaa-Pro aminopeptidase P (AMPP) of Fusarium vanettenii (strain ATCC MYA-4622 / CBS 123669 / FGSC 9596 / NRRL 45880 / 77-13-4) (Fusarium solani subsp. pisi).